We begin with the raw amino-acid sequence, 192 residues long: Transcription termination/antitermination protein NusG (192 aa).

Residues 140 to 168 (VGEIVTVTDGPFETFMGTVEEIDQEKNRL) enclose the KOW domain.

This sequence belongs to the NusG family.

In terms of biological role, participates in transcription elongation, termination and antitermination. This chain is Transcription termination/antitermination protein NusG, found in Rickettsia conorii (strain ATCC VR-613 / Malish 7).